We begin with the raw amino-acid sequence, 736 residues long: Eukaryotic translation initiation factor 3 subunit B (736 aa).

Positions 1–94 (MAAVFDDIRL…LFIEFEDAGA (94 aa)) are sufficient for interaction with HCR1 and TIF32. The sufficient for interaction with PIC8 stretch occupies residues 1 to 219 (MAAVFDDIRL…GIASWGGPQF (219 aa)). One can recognise an RRM domain in the interval 37–120 (RYVVVDGAPV…HRLWVNGLDD (84 aa)). 10 WD repeats span residues 140–182 (EFEA…PENV), 186–224 (RRNWSNSILNFSPHGTYLFSFHDQGIASWGGPQFKRLRR), 226–244 (AHPDVKAISMSSTEKYLVT), 245–284 (FSSEPLEVSDEPNEACPFGPESRGHQLCIWDVATGVCVKT), 288–328 (PPQQ…QLLG), 332–375 (MKIE…QSCK), 443–483 (EIKD…VSFY), 511–557 (AIDG…TEKI), 566–604 (ATLRDVAHINYASATDYEWDPSGRYLAFWSSAWKHKAEN), and 616–662 (VREE…QDAM).

It belongs to the eIF-3 subunit B family. Component of the eukaryotic translation initiation factor 3 (eIF-3) complex.

The protein resides in the cytoplasm. Functionally, RNA-binding component of the eukaryotic translation initiation factor 3 (eIF-3) complex, which is involved in protein synthesis of a specialized repertoire of mRNAs and, together with other initiation factors, stimulates binding of mRNA and methionyl-tRNAi to the 40S ribosome. The eIF-3 complex specifically targets and initiates translation of a subset of mRNAs involved in cell proliferation. This Eremothecium gossypii (strain ATCC 10895 / CBS 109.51 / FGSC 9923 / NRRL Y-1056) (Yeast) protein is Eukaryotic translation initiation factor 3 subunit B.